We begin with the raw amino-acid sequence, 89 residues long: MASGTFTQRLLVALMIFALIADLSTLVAARPQDSDAASVAAAIRYLQELETKHAQHARPRFGKRGGYLNPAIFGQDEQEVDWQDSTFSR.

The first 29 residues, 1-29 (MASGTFTQRLLVALMIFALIADLSTLVAA), serve as a signal peptide directing secretion. Phe-61 carries the post-translational modification Phenylalanine amide. A propeptide spanning residues 65 to 89 (GGYLNPAIFGQDEQEVDWQDSTFSR) is cleaved from the precursor.

It belongs to the NPY family.

The protein resides in the secreted. In terms of biological role, an integral part of the sensory system that mediates food signaling, providing the neural basis for the regulation of food response; coordinates larval foraging and social behavior changes during development. May have a hormonal role in females. In Anopheles gambiae (African malaria mosquito), this protein is Neuropeptide F.